Reading from the N-terminus, the 338-residue chain is Tetraacyldisaccharide 4'-kinase (338 aa).

65–72 provides a ligand contact to ATP; that stretch reads TVGGTGKT.

This sequence belongs to the LpxK family.

It carries out the reaction a lipid A disaccharide + ATP = a lipid IVA + ADP + H(+). It participates in glycolipid biosynthesis; lipid IV(A) biosynthesis; lipid IV(A) from (3R)-3-hydroxytetradecanoyl-[acyl-carrier-protein] and UDP-N-acetyl-alpha-D-glucosamine: step 6/6. Functionally, transfers the gamma-phosphate of ATP to the 4'-position of a tetraacyldisaccharide 1-phosphate intermediate (termed DS-1-P) to form tetraacyldisaccharide 1,4'-bis-phosphate (lipid IVA). This chain is Tetraacyldisaccharide 4'-kinase, found in Paraburkholderia xenovorans (strain LB400).